A 196-amino-acid chain; its full sequence is Ribosome maturation factor RimM (196 aa).

A PRC barrel domain is found at 118–196 (QGEYYWRDLI…EMTVDWDPDF (79 aa)).

This sequence belongs to the RimM family. In terms of assembly, binds ribosomal protein uS19.

Its subcellular location is the cytoplasm. Functionally, an accessory protein needed during the final step in the assembly of 30S ribosomal subunit, possibly for assembly of the head region. Essential for efficient processing of 16S rRNA. May be needed both before and after RbfA during the maturation of 16S rRNA. It has affinity for free ribosomal 30S subunits but not for 70S ribosomes. The polypeptide is Ribosome maturation factor RimM (Alcanivorax borkumensis (strain ATCC 700651 / DSM 11573 / NCIMB 13689 / SK2)).